Consider the following 187-residue polypeptide: Probable GTP-binding protein EngB (187 aa).

The 170-residue stretch at 18–187 (KNSEIAFWGR…KLKENINSNF (170 aa)) folds into the EngB-type G domain. Residues 26-33 (GRSNVGKS), 52-56 (GRTQL), 70-73 (DLPG), 137-140 (TKID), and 168-170 (VSS) contribute to the GTP site. 2 residues coordinate Mg(2+): S33 and T54.

Belongs to the TRAFAC class TrmE-Era-EngA-EngB-Septin-like GTPase superfamily. EngB GTPase family. It depends on Mg(2+) as a cofactor.

Its function is as follows. Necessary for normal cell division and for the maintenance of normal septation. The chain is Probable GTP-binding protein EngB from Mycoplasmopsis synoviae (strain 53) (Mycoplasma synoviae).